Consider the following 248-residue polypeptide: 3-deoxy-manno-octulosonate cytidylyltransferase (248 aa).

It belongs to the KdsB family.

Its subcellular location is the cytoplasm. It catalyses the reaction 3-deoxy-alpha-D-manno-oct-2-ulosonate + CTP = CMP-3-deoxy-beta-D-manno-octulosonate + diphosphate. It participates in nucleotide-sugar biosynthesis; CMP-3-deoxy-D-manno-octulosonate biosynthesis; CMP-3-deoxy-D-manno-octulosonate from 3-deoxy-D-manno-octulosonate and CTP: step 1/1. Its pathway is bacterial outer membrane biogenesis; lipopolysaccharide biosynthesis. In terms of biological role, activates KDO (a required 8-carbon sugar) for incorporation into bacterial lipopolysaccharide in Gram-negative bacteria. The chain is 3-deoxy-manno-octulosonate cytidylyltransferase from Klebsiella pneumoniae (strain 342).